Reading from the N-terminus, the 274-residue chain is Undecaprenyl-diphosphatase (274 aa).

The next 7 helical transmembrane spans lie at 4–24 (PLFV…FLPI), 41–61 (DATS…AVCW), 83–103 (FVGL…MFHS), 108–128 (LLFN…LILW), 184–204 (AAEF…VYDL), 218–238 (VFAI…KAFI), and 246–266 (FIAF…TWQL).

It belongs to the UppP family.

It is found in the cell inner membrane. The catalysed reaction is di-trans,octa-cis-undecaprenyl diphosphate + H2O = di-trans,octa-cis-undecaprenyl phosphate + phosphate + H(+). Catalyzes the dephosphorylation of undecaprenyl diphosphate (UPP). Confers resistance to bacitracin. In Aromatoleum aromaticum (strain DSM 19018 / LMG 30748 / EbN1) (Azoarcus sp. (strain EbN1)), this protein is Undecaprenyl-diphosphatase.